Reading from the N-terminus, the 27-residue chain is Small ribosomal subunit protein bTHX (27 aa).

Residues 1 to 13 (MGKGDRRTRRGKI) are compositionally biased toward basic residues. Residues 1 to 27 (MGKGDRRTRRGKIWRGTYGKYRPRKKK) form a disordered region.

Belongs to the bacterial ribosomal protein bTHX family. In terms of assembly, part of the 30S ribosomal subunit.

In terms of biological role, binds at the top of the head of the 30S subunit. It stabilizes a number of different RNA elements and thus is important for subunit structure. In Thermus aquaticus, this protein is Small ribosomal subunit protein bTHX (rpsU).